The chain runs to 704 residues: Glycogen [starch] synthase, liver (704 aa).

A phosphoserine mark is found at Ser8 and Ser11. Lys40 contacts UDP. UDP-alpha-D-glucose is bound by residues His205 and Arg211. Residues His291, Glu292, Gln294, His297, and Lys301 each coordinate alpha-D-glucose 6-phosphate. Residue Arg331 participates in UDP binding. Arg331 lines the UDP-alpha-D-glucose pocket. His501 contacts alpha-D-glucose 6-phosphate. Positions 510, 512, and 513 each coordinate UDP-alpha-D-glucose. Residue Thr515 coordinates UDP. Alpha-D-glucose 6-phosphate is bound by residues Arg582 and Arg586. A disordered region spans residues 620–704 (KFHLEPTSPP…KKKLHGEYKN (85 aa)). Ser627 carries the phosphoserine modification. Phosphoserine; by GSK3-alpha and GSK3-beta is present on residues Ser641, Ser645, Ser649, and Ser653. The segment covering 647-657 (SGSQTSSPQSS) has biased composition (low complexity). Ser657 is modified (phosphoserine; by CK2). A compositionally biased stretch (acidic residues) spans 659 to 675 (VENEGDEDERYDEEEEA). Ser684 carries the phosphoserine modification.

The protein belongs to the glycosyltransferase 3 family. As to quaternary structure, part of the glycogen synthase (GS)-glycogenin complex, a heterooctamer composed of a tetramer of GS and 2 dimers of glycogenin, where each GS protomer binds to one glycogenin subunit (via glycogenin C-terminus); the GS tetramer may dissociate from glycogenin dimers to continue glycogen polymerization on its own. May also form a heterooctamer complex with GYG1 (via GYG1 C-terminus). Primed phosphorylation at Ser-657 (site 5) by CSNK2A1 and CSNK2A2 is required for inhibitory phosphorylation at Ser-641 (site 3a), Ser-645 (site 3b), Ser-649 (site 3c) and Ser-653 (site 4) by GSK3A an GSK3B. Dephosphorylation at Ser-641 and Ser-645 by PP1 activates the enzyme. Phosphorylation at Ser-8 is not required for interaction with GYG1. Interaction with GYG1 does not regulate the phosphorylation at Ser-8 and Ser-641. In terms of tissue distribution, specifically expressed in liver (at protein level).

It carries out the reaction [(1-&gt;4)-alpha-D-glucosyl](n) + UDP-alpha-D-glucose = [(1-&gt;4)-alpha-D-glucosyl](n+1) + UDP + H(+). It participates in glycan biosynthesis; glycogen biosynthesis. With respect to regulation, allosteric activation by glucose-6-phosphate. Phosphorylation reduces the activity towards UDP-glucose. When in the non-phosphorylated state, glycogen synthase does not require glucose-6-phosphate as an allosteric activator; when phosphorylated it does. In terms of biological role, glycogen synthase participates in the glycogen biosynthetic process along with glycogenin and glycogen branching enzyme. Extends the primer composed of a few glucose units formed by glycogenin by adding new glucose units to it. In this context, glycogen synthase transfers the glycosyl residue from UDP-Glc to the non-reducing end of alpha-1,4-glucan. The chain is Glycogen [starch] synthase, liver from Rattus norvegicus (Rat).